Consider the following 93-residue polypeptide: Putative pterin-4-alpha-carbinolamine dehydratase (93 aa).

Belongs to the pterin-4-alpha-carbinolamine dehydratase family.

It carries out the reaction (4aS,6R)-4a-hydroxy-L-erythro-5,6,7,8-tetrahydrobiopterin = (6R)-L-erythro-6,7-dihydrobiopterin + H2O. The protein is Putative pterin-4-alpha-carbinolamine dehydratase of Sulfurisphaera tokodaii (strain DSM 16993 / JCM 10545 / NBRC 100140 / 7) (Sulfolobus tokodaii).